The primary structure comprises 351 residues: Cell division protein FtsZ (351 aa).

Residues 31–35, 118–120, glutamate 149, arginine 153, and aspartate 197 contribute to the GTP site; these read GAGNN and GTG.

The protein belongs to the FtsZ family. As to quaternary structure, homodimer. Polymerizes to form a dynamic ring structure in a strictly GTP-dependent manner. Interacts directly with several other division proteins. Interacts with FtsA.

It localises to the cytoplasm. Its function is as follows. Essential cell division protein that forms a contractile ring structure (Z ring) at the future cell division site. The regulation of the ring assembly controls the timing and the location of cell division. One of the functions of the FtsZ ring is to recruit other cell division proteins to the septum to produce a new cell wall between the dividing cells. Binds GTP and shows GTPase activity. The protein is Cell division protein FtsZ of Thermotoga maritima (strain ATCC 43589 / DSM 3109 / JCM 10099 / NBRC 100826 / MSB8).